Consider the following 270-residue polypeptide: tRNA pseudouridine synthase A (270 aa).

Asp-60 serves as the catalytic Nucleophile. An RNA binding region spans residues Phe-107–Phe-111. Tyr-118 is a binding site for substrate. Positions Gln-168–Arg-172 are interaction with tRNA.

This sequence belongs to the tRNA pseudouridine synthase TruA family. As to quaternary structure, homodimer.

The catalysed reaction is uridine(38/39/40) in tRNA = pseudouridine(38/39/40) in tRNA. Functionally, formation of pseudouridine at positions 38, 39 and 40 in the anticodon stem and loop of transfer RNAs. This chain is tRNA pseudouridine synthase A, found in Escherichia coli O9:H4 (strain HS).